Reading from the N-terminus, the 316-residue chain is Probable cell division protein WhiA (316 aa).

The H-T-H motif DNA-binding region spans 275–309 (TLKELGEMVSGGKISKSGINHRLRKIDEIAEKLRA).

It belongs to the WhiA family.

Its function is as follows. Involved in cell division and chromosome segregation. In Bacillus cereus (strain G9842), this protein is Probable cell division protein WhiA.